Here is a 230-residue protein sequence, read N- to C-terminus: Ly6/PLAUR domain-containing protein 8 (230 aa).

Positions 1-20 (MKSFLFAGIVVVLTVAAVDT) are cleaved as a signal peptide. Residues asparagine 37, asparagine 44, asparagine 74, asparagine 77, asparagine 90, asparagine 106, asparagine 110, asparagine 132, asparagine 137, asparagine 156, asparagine 168, asparagine 181, and asparagine 197 are each glycosylated (N-linked (GlcNAc...) asparagine). The region spanning 125-172 (CPACYGNNETSCNETRKCYGERCVSIIAEFTNETKTLVLKGCSNVSIS) is the UPAR/Ly6 domain. Serine 211 carries GPI-anchor amidated serine lipidation. Positions 212 to 230 (QASFTPLALASILLLSLLL) are cleaved as a propeptide — removed in mature form.

Belongs to the CNF-like-inhibitor family. Highly N-glycosylated. Not O-glycosylated. In terms of processing, GPI-anchored. The GPI-anchor is cleaved, leading to secretion into the colonic lumen.

It localises to the cell membrane. It is found in the secreted. In terms of biological role, secreted protein specifically required to prevent invasion of Gram-negative bacteria in the inner mucus layer of the colon epithelium, a portion of the large intestine which is free of commensal microbiota. Prevents invasion of flagellated microbiota by binding to the flagellum of bacteria, such as P.mirabilis, thereby inhibiting bacterial motility in the intestinal lumen. Segregation of intestinal bacteria and epithelial cells in the colon is required to preserve intestinal homeostasis. The sequence is that of Ly6/PLAUR domain-containing protein 8 (LYPD8) from Bos taurus (Bovine).